Reading from the N-terminus, the 55-residue chain is Large ribosomal subunit protein uL30 (55 aa).

This sequence belongs to the universal ribosomal protein uL30 family. As to quaternary structure, part of the 50S ribosomal subunit.

Its function is as follows. Binds the 5S and 23S rRNAs. The chain is Large ribosomal subunit protein uL30 from Deinococcus radiodurans (strain ATCC 13939 / DSM 20539 / JCM 16871 / CCUG 27074 / LMG 4051 / NBRC 15346 / NCIMB 9279 / VKM B-1422 / R1).